Consider the following 313-residue polypeptide: Aspartoacylase (313 aa).

Residues histidine 21 and glutamate 24 each coordinate Zn(2+). Residues arginine 63, asparagine 70, and arginine 71 each coordinate N-acetyl-L-aspartate. Zn(2+) is bound at residue histidine 116. N-acetyl-L-aspartate contacts are provided by tyrosine 164 and arginine 168. Residue glutamate 178 is the Proton donor/acceptor of the active site. Position 288 (tyrosine 288) interacts with N-acetyl-L-aspartate.

Belongs to the AspA/AstE family. Aspartoacylase subfamily. Homodimer. It depends on Zn(2+) as a cofactor.

It localises to the cytoplasm. Its subcellular location is the nucleus. It catalyses the reaction an N-acyl-L-aspartate + H2O = a carboxylate + L-aspartate. The enzyme catalyses N-acetyl-L-aspartate + H2O = L-aspartate + acetate. In terms of biological role, catalyzes the deacetylation of N-acetylaspartic acid (NAA) to produce acetate and L-aspartate. NAA occurs in high concentration in brain and its hydrolysis NAA plays a significant part in the maintenance of intact white matter. In other tissues it acts as a scavenger of NAA from body fluids. The sequence is that of Aspartoacylase from Pongo abelii (Sumatran orangutan).